The following is a 500-amino-acid chain: Aspartyl/glutamyl-tRNA(Asn/Gln) amidotransferase subunit B (500 aa).

This sequence belongs to the GatB/GatE family. GatB subfamily. As to quaternary structure, heterotrimer of A, B and C subunits.

It carries out the reaction L-glutamyl-tRNA(Gln) + L-glutamine + ATP + H2O = L-glutaminyl-tRNA(Gln) + L-glutamate + ADP + phosphate + H(+). It catalyses the reaction L-aspartyl-tRNA(Asn) + L-glutamine + ATP + H2O = L-asparaginyl-tRNA(Asn) + L-glutamate + ADP + phosphate + 2 H(+). Allows the formation of correctly charged Asn-tRNA(Asn) or Gln-tRNA(Gln) through the transamidation of misacylated Asp-tRNA(Asn) or Glu-tRNA(Gln) in organisms which lack either or both of asparaginyl-tRNA or glutaminyl-tRNA synthetases. The reaction takes place in the presence of glutamine and ATP through an activated phospho-Asp-tRNA(Asn) or phospho-Glu-tRNA(Gln). The sequence is that of Aspartyl/glutamyl-tRNA(Asn/Gln) amidotransferase subunit B from Brucella melitensis biotype 2 (strain ATCC 23457).